The chain runs to 416 residues: Serine hydroxymethyltransferase (416 aa).

(6S)-5,6,7,8-tetrahydrofolate-binding positions include Leu-121 and 125–127 (GHL). Lys-229 is modified (N6-(pyridoxal phosphate)lysine).

The protein belongs to the SHMT family. Homodimer. Requires pyridoxal 5'-phosphate as cofactor.

The protein localises to the cytoplasm. The catalysed reaction is (6R)-5,10-methylene-5,6,7,8-tetrahydrofolate + glycine + H2O = (6S)-5,6,7,8-tetrahydrofolate + L-serine. The protein operates within one-carbon metabolism; tetrahydrofolate interconversion. It functions in the pathway amino-acid biosynthesis; glycine biosynthesis; glycine from L-serine: step 1/1. Catalyzes the reversible interconversion of serine and glycine with tetrahydrofolate (THF) serving as the one-carbon carrier. This reaction serves as the major source of one-carbon groups required for the biosynthesis of purines, thymidylate, methionine, and other important biomolecules. Also exhibits THF-independent aldolase activity toward beta-hydroxyamino acids, producing glycine and aldehydes, via a retro-aldol mechanism. This is Serine hydroxymethyltransferase from Neisseria gonorrhoeae.